The following is a 783-amino-acid chain: Rabenosyn-5 (783 aa).

Ala-2 is modified (N-acetylalanine). Residue Ser-3 is modified to Phosphoserine. Residues 14-37 (FLCPLCLKDLQSFYQLQSHYEEEH) form a C2H2-type zinc finger. The tract at residues 99-262 (RSHLSDFKKH…HCKDKLLKRE (164 aa)) is necessary for the correct targeting to endosomes. The FYVE-type zinc-finger motif lies at 156 to 259 (DQDVPFCPDC…CCTHCKDKLL (104 aa)). Zn(2+) is bound by residues Cys-162, Cys-165, Cys-178, Cys-181, Cys-186, and Cys-189. Over residues 206 to 223 (KDSLSTHTSPSQSPNSVH) the composition is skewed to polar residues. A disordered region spans residues 206–240 (KDSLSTHTSPSQSPNSVHGSRRGSISSMSSVSSVL). Phosphoserine is present on residues Ser-214, Ser-218, Ser-225, and Ser-229. Positions 227–239 (RGSISSMSSVSSV) are enriched in low complexity. Zn(2+) contacts are provided by Cys-251 and Cys-254. Residues 263-499 (QQMDEKEHTP…QLQDEYDQQQ (237 aa)) form a necessary for interaction with RAB4A region. The segment at 263–783 (QQMDEKEHTP…TLAKQKGAPN (521 aa)) is necessary for interaction with EHD1. 2 coiled-coil regions span residues 377–412 (TKEQ…KLEE) and 471–531 (QAKA…ELER). Composition is skewed to basic and acidic residues over residues 387–399 (KRKQ…RTVE) and 405–414 (ESRRKLEERQ). Residues 387–433 (KRKQDLEQKRTVERQAALESRRKLEERQSGLASHTANGDVRSLRGIP) are disordered. Positions 495–514 (YDQQQTEKAIELSRKQAEEE) constitute a UIM domain. Disordered stretches follow at residues 569 to 638 (SYSL…SPTE) and 663 to 733 (FEED…EEHI). Composition is skewed to polar residues over residues 571-584 (SLDQ…SSTA) and 610-623 (TLPQ…SDKA). The necessary for interaction with RAB5A stretch occupies residues 627–783 (PFDEDDLSSP…TLAKQKGAPN (157 aa)). Positions 663-673 (FEEDAEEEEVA) are enriched in acidic residues. Position 686 is a phosphoserine (Ser-686). The segment covering 721-733 (VDSDSGMEAEEHI) has biased composition (acidic residues).

Interacts with EHD1, RAB4A, RAB5A, RAB22A, RAB24 and VPS45. Binds simultaneously to RAB4A and RAB5A in vitro. Interacts with RAB4A and RAB5A that has been activated by GTP binding.

It localises to the cell membrane. Its subcellular location is the early endosome membrane. Functionally, rab4/Rab5 effector protein acting in early endocytic membrane fusion and membrane trafficking of recycling endosomes. Required for endosome fusion either homotypically or with clathrin coated vesicles. Plays a role in the lysosomal trafficking of CTSD/cathepsin D from the Golgi to lysosomes. Also promotes the recycling of transferrin directly from early endosomes to the plasma membrane. Binds phospholipid vesicles containing phosphatidylinositol 3-phosphate (PtdInsP3). Plays a role in the recycling of transferrin receptor to the plasma membrane. The protein is Rabenosyn-5 of Mus musculus (Mouse).